The primary structure comprises 119 residues: MKKSYRVKREKDFQAIFKLGQSMANRKFVIYHLKGEHKHFRAGISVGKKLGNAVTRNAVKRKIRHVLMELGDHLKTEDFVVIARRGAEELDYQAVKQNLHHVLKLAKLLEEGFEIEKKS.

Belongs to the RnpA family. Consists of a catalytic RNA component (M1 or rnpB) and a protein subunit.

The enzyme catalyses Endonucleolytic cleavage of RNA, removing 5'-extranucleotides from tRNA precursor.. RNaseP catalyzes the removal of the 5'-leader sequence from pre-tRNA to produce the mature 5'-terminus. It can also cleave other RNA substrates such as 4.5S RNA. The protein component plays an auxiliary but essential role in vivo by binding to the 5'-leader sequence and broadening the substrate specificity of the ribozyme. The protein is Ribonuclease P protein component of Streptococcus equi subsp. zooepidemicus (strain MGCS10565).